Consider the following 229-residue polypeptide: Rhamnosyl O-methyltransferase (229 aa).

Residues 1–23 (MERVRQMFSCVSGMIYRPTDSIA) form the signal peptide.

This sequence belongs to the rhamnosyl O-methyltransferase family.

Its function is as follows. Catalyzes the O-methylation of the hydroxyl group located on C-2 of the first rhamnosyl residue linked to the phenolic group of glycosylated phenolphthiocerol dimycocerosates (PGL) and p-hydroxybenzoic acid derivatives (p-HBAD). In Mycobacterium leprae (strain TN), this protein is Rhamnosyl O-methyltransferase.